Reading from the N-terminus, the 504-residue chain is ATP synthase subunit alpha 1 (504 aa).

170–177 (GDRQIGKT) provides a ligand contact to ATP.

Belongs to the ATPase alpha/beta chains family. In terms of assembly, F-type ATPases have 2 components, CF(1) - the catalytic core - and CF(0) - the membrane proton channel. CF(1) has five subunits: alpha(3), beta(3), gamma(1), delta(1), epsilon(1). CF(0) has three main subunits: a(1), b(2) and c(9-12). The alpha and beta chains form an alternating ring which encloses part of the gamma chain. CF(1) is attached to CF(0) by a central stalk formed by the gamma and epsilon chains, while a peripheral stalk is formed by the delta and b chains.

Its subcellular location is the cell inner membrane. The enzyme catalyses ATP + H2O + 4 H(+)(in) = ADP + phosphate + 5 H(+)(out). Functionally, produces ATP from ADP in the presence of a proton gradient across the membrane. The alpha chain is a regulatory subunit. In Syntrophus aciditrophicus (strain SB), this protein is ATP synthase subunit alpha 1.